The primary structure comprises 376 residues: DNA-directed RNA polymerase subunit alpha (376 aa).

Residues 1–259 (MSDNSQNLLY…KHFSIFEKMD (259 aa)) form an alpha N-terminal domain (alpha-NTD) region. An alpha C-terminal domain (alpha-CTD) region spans residues 276–376 (KDDILHKLVL…EKIRSKNVKG (101 aa)).

This sequence belongs to the RNA polymerase alpha chain family. As to quaternary structure, homodimer. The RNAP catalytic core consists of 2 alpha, 1 beta, 1 beta' and 1 omega subunit. When a sigma factor is associated with the core the holoenzyme is formed, which can initiate transcription.

The catalysed reaction is RNA(n) + a ribonucleoside 5'-triphosphate = RNA(n+1) + diphosphate. Its function is as follows. DNA-dependent RNA polymerase catalyzes the transcription of DNA into RNA using the four ribonucleoside triphosphates as substrates. This is DNA-directed RNA polymerase subunit alpha from Chlamydia felis (strain Fe/C-56) (Chlamydophila felis).